Reading from the N-terminus, the 102-residue chain is MNLIDIILFYGFQFNDYWTTVLGLRVGAEEKNPIAGLFISSPYRLALFKFGLITIGMFILIYVVRFKTWTEIVLTVTDVVECLVTLNNTLTIRRYKRRGVRG.

This is an uncharacterized protein from Sulfolobus spindle-shape virus 1 (SSV1).